The following is a 110-amino-acid chain: UPF0060 membrane protein BPSL1340 (110 aa).

A run of 4 helical transmembrane segments spans residues Ala9–Leu29, Pro34–Leu54, Ala64–Val84, and Leu86–Leu106.

It belongs to the UPF0060 family.

The protein resides in the cell inner membrane. This chain is UPF0060 membrane protein BPSL1340, found in Burkholderia pseudomallei (strain K96243).